A 512-amino-acid polypeptide reads, in one-letter code: DEAD-box ATP-dependent RNA helicase 5 (512 aa).

Disordered stretches follow at residues 1–33 and 45–76; these read MGRS…KLEA and ATST…GGGK. Residues 14 to 45 adopt a coiled-coil conformation; sequence SRKSKKEKKSKKDKKRKLEAEAEVVVVEAAAA. A compositionally biased stretch (basic residues) spans 16–30; that stretch reads KSKKEKKSKKDKKRK. Residues 94 to 120 carry the Q motif motif; it reads SSFAATALPPQVLDCCKGFERPSPIQA. The Helicase ATP-binding domain maps to 123 to 300; that stretch reads WPYLLDGRDF…QEFMDPNPIK (178 aa). 136 to 143 serves as a coordination point for ATP; the sequence is AATGSGKT. Residues 248–251 carry the DEAD box motif; the sequence is DEAD. Positions 333–476 constitute a Helicase C-terminal domain; that stretch reads LLDKYHKAQR…VVPPALTKFG (144 aa).

It belongs to the DEAD box helicase family. DDX5/DBP2 subfamily.

The protein localises to the nucleus. Its subcellular location is the nucleolus. The enzyme catalyses ATP + H2O = ADP + phosphate + H(+). Functionally, ATP-dependent RNA helicase required for 60S ribosomal subunit synthesis. Involved in efficient pre-rRNA processing, predominantly at site A3, which is necessary for the normal formation of 25S and 5.8S rRNAs. This is DEAD-box ATP-dependent RNA helicase 5 from Oryza sativa subsp. japonica (Rice).